The sequence spans 307 residues: Thymidylate synthase (307 aa).

DUMP is bound by residues R26 and 160–161; that span reads RR. C180 serves as the catalytic Nucleophile. Residues 209-212, N220, and 250-252 each bind dUMP; these read RSCD and HIY. D212 serves as a coordination point for (6R)-5,10-methylene-5,6,7,8-tetrahydrofolate. Residue A306 coordinates (6R)-5,10-methylene-5,6,7,8-tetrahydrofolate.

Belongs to the thymidylate synthase family. Bacterial-type ThyA subfamily. As to quaternary structure, homodimer.

It localises to the cytoplasm. The catalysed reaction is dUMP + (6R)-5,10-methylene-5,6,7,8-tetrahydrofolate = 7,8-dihydrofolate + dTMP. The protein operates within pyrimidine metabolism; dTTP biosynthesis. Catalyzes the reductive methylation of 2'-deoxyuridine-5'-monophosphate (dUMP) to 2'-deoxythymidine-5'-monophosphate (dTMP) while utilizing 5,10-methylenetetrahydrofolate (mTHF) as the methyl donor and reductant in the reaction, yielding dihydrofolate (DHF) as a by-product. This enzymatic reaction provides an intracellular de novo source of dTMP, an essential precursor for DNA biosynthesis. The chain is Thymidylate synthase from Rhizobium rhizogenes (strain K84 / ATCC BAA-868) (Agrobacterium radiobacter).